The primary structure comprises 281 residues: Diaminopimelate epimerase (281 aa).

The substrate site is built by Asn-14 and Asn-65. Catalysis depends on Cys-74, which acts as the Proton donor. Residues 75 to 76 (GN), Asn-165, Asn-198, and 216 to 217 (ER) each bind substrate. The Proton acceptor role is filled by Cys-225. Substrate is bound at residue 226–227 (GT).

This sequence belongs to the diaminopimelate epimerase family. In terms of assembly, homodimer.

The protein localises to the cytoplasm. It catalyses the reaction (2S,6S)-2,6-diaminopimelate = meso-2,6-diaminopimelate. It participates in amino-acid biosynthesis; L-lysine biosynthesis via DAP pathway; DL-2,6-diaminopimelate from LL-2,6-diaminopimelate: step 1/1. Catalyzes the stereoinversion of LL-2,6-diaminopimelate (L,L-DAP) to meso-diaminopimelate (meso-DAP), a precursor of L-lysine and an essential component of the bacterial peptidoglycan. In Leptospira borgpetersenii serovar Hardjo-bovis (strain JB197), this protein is Diaminopimelate epimerase.